A 504-amino-acid chain; its full sequence is Bacterial leucyl aminopeptidase (504 aa).

Positions 1–21 (MKYTKTLLAMVLSATFCQAYA) are cleaved as a signal peptide. The propeptide occupies 22–106 (EDKVWISIGA…AMPTTLASFV (85 aa)). Positions 203, 223, 258, and 285 each coordinate Zn(2+). Cysteine 329 and cysteine 333 are disulfide-bonded. Residue histidine 362 participates in Zn(2+) binding. The propeptide at 406 to 504 (LEDGVPVTDL…SGASLKASTF (99 aa)) is removed in mature form.

It belongs to the peptidase M28 family. M28E subfamily. It depends on Zn(2+) as a cofactor.

The protein localises to the secreted. The catalysed reaction is Release of an N-terminal amino acid, preferentially leucine, but not glutamic or aspartic acids.. This chain is Bacterial leucyl aminopeptidase, found in Vibrio proteolyticus (Aeromonas proteolytica).